The primary structure comprises 130 residues: Anti-adapter protein IraD (130 aa).

The protein belongs to the GpW/Gp25 family. IraD subfamily. Interacts with RssB.

The protein localises to the cytoplasm. Inhibits RpoS proteolysis by regulating RssB activity, thereby increasing the stability of the sigma stress factor RpoS during oxidative stress. Its effect on RpoS stability is due to its interaction with RssB, which probably blocks the interaction of RssB with RpoS, and the consequent delivery of the RssB-RpoS complex to the ClpXP protein degradation pathway. This Escherichia coli O9:H4 (strain HS) protein is Anti-adapter protein IraD.